A 45-amino-acid polypeptide reads, in one-letter code: Large ribosomal subunit protein bL34 (45 aa).

The tract at residues 1–45 (MTKRTLGGTSRKRKRVSGFRVRMRSHTGRRVIRTRRKRGRSRLAV) is disordered. The segment covering 10–45 (SRKRKRVSGFRVRMRSHTGRRVIRTRRKRGRSRLAV) has biased composition (basic residues).

This sequence belongs to the bacterial ribosomal protein bL34 family.

This Parasynechococcus marenigrum (strain WH8102) protein is Large ribosomal subunit protein bL34.